The sequence spans 84 residues: Figainin 2 (84 aa).

The signal sequence occupies residues methionine 1–cysteine 22. Positions glutamate 23 to glutamate 39 are enriched in basic and acidic residues. A disordered region spans residues glutamate 23–lysine 53. Positions glutamate 23 to glutamate 54 are excised as a propeptide. Positions glutamate 40 to asparagine 49 are enriched in acidic residues.

As to expression, expressed by the skin glands.

The protein resides in the secreted. Antimicrobial peptide that displays antibacterial, antiprotozoal, and antiviral activity. Exhibits antibacterial activity against the Gram-positive bacteria S.epidermidis ATCC 12228 (MIC=4 uM), E.casseliflavus ATCC 700327 (MIC=4 uM), S.aureus ATCC 25923 (MIC=8 uM) and E.faecalis ATCC 29212 (MIC=8 uM), and the Gram-negative bacteria E.coli ATCC 25922 (MIC=8 uM), K.pneumoniae ATCC 13883 (MIC=8 uM), the multi-resistant clinical isolate strain K.pneumoniae carbapanemase (KPC) MR (MIC=16 uM), and P.aeruginosa ATCC 27853 (MIC=32 uM). Displays antiprotozoal activity against the epimastigote form of T.cruzi (IC(50)=6.32 uM). Does not show antimicrobial against the fungi C.albicans ATCC 90028 and C.parapsilosis ATCC 22019. Displays antiviral activity against the human viruses chikungunya (EC(50)=17.9 uM), Dengue serotype 4 (EC(50)=20.8 uM) and Yellow Fever (EC(50)=21.8 uM). Shows moderate cytolytic activity against human erythrocytes (HC(50)=48.9 uM), and activates the oxidative burst in human neutrophils. Also displays anti-proliferative effects against MCF-7 breast cancer cells (IC(50)=15.3 uM) and B16F10 murine melanoma cells (IC(50)=12.8 uM). This Boana raniceps (Chaco tree frog) protein is Figainin 2.